We begin with the raw amino-acid sequence, 1199 residues long: DNA-directed RNA polymerase subunit beta (1199 aa).

The interval 1175-1199 (EEKKAHEAAAQATDGKSANSTDDKK) is disordered. The segment covering 1188-1199 (DGKSANSTDDKK) has biased composition (polar residues).

This sequence belongs to the RNA polymerase beta chain family. As to quaternary structure, the RNAP catalytic core consists of 2 alpha, 1 beta, 1 beta' and 1 omega subunit. When a sigma factor is associated with the core the holoenzyme is formed, which can initiate transcription.

It carries out the reaction RNA(n) + a ribonucleoside 5'-triphosphate = RNA(n+1) + diphosphate. DNA-dependent RNA polymerase catalyzes the transcription of DNA into RNA using the four ribonucleoside triphosphates as substrates. The sequence is that of DNA-directed RNA polymerase subunit beta from Lacticaseibacillus casei (strain BL23) (Lactobacillus casei).